The chain runs to 647 residues: 1-deoxy-D-xylulose-5-phosphate synthase (647 aa).

Thiamine diphosphate-binding positions include His-72 and 113 to 115 (GHA). Residue Asp-144 participates in Mg(2+) binding. Residues 145–146 (GA), Asn-174, Tyr-287, and Glu-370 contribute to the thiamine diphosphate site. Residue Asn-174 coordinates Mg(2+).

Belongs to the transketolase family. DXPS subfamily. In terms of assembly, homodimer. Mg(2+) is required as a cofactor. Thiamine diphosphate serves as cofactor.

It carries out the reaction D-glyceraldehyde 3-phosphate + pyruvate + H(+) = 1-deoxy-D-xylulose 5-phosphate + CO2. The protein operates within metabolic intermediate biosynthesis; 1-deoxy-D-xylulose 5-phosphate biosynthesis; 1-deoxy-D-xylulose 5-phosphate from D-glyceraldehyde 3-phosphate and pyruvate: step 1/1. Its function is as follows. Catalyzes the acyloin condensation reaction between C atoms 2 and 3 of pyruvate and glyceraldehyde 3-phosphate to yield 1-deoxy-D-xylulose-5-phosphate (DXP). This chain is 1-deoxy-D-xylulose-5-phosphate synthase, found in Synechococcus sp. (strain WH7803).